The primary structure comprises 344 residues: Anthranilate phosphoribosyltransferase (344 aa).

5-phospho-alpha-D-ribose 1-diphosphate-binding positions include glycine 86, 89–90 (GD), threonine 94, 96–99 (NIST), 114–122 (KHGNKSASG), and serine 126. An anthranilate-binding site is contributed by glycine 86. Position 98 (serine 98) interacts with Mg(2+). An anthranilate-binding site is contributed by asparagine 117. Arginine 172 lines the anthranilate pocket. Mg(2+)-binding residues include aspartate 231 and glutamate 232.

It belongs to the anthranilate phosphoribosyltransferase family. Homodimer. The cofactor is Mg(2+).

It catalyses the reaction N-(5-phospho-beta-D-ribosyl)anthranilate + diphosphate = 5-phospho-alpha-D-ribose 1-diphosphate + anthranilate. The protein operates within amino-acid biosynthesis; L-tryptophan biosynthesis; L-tryptophan from chorismate: step 2/5. In terms of biological role, catalyzes the transfer of the phosphoribosyl group of 5-phosphorylribose-1-pyrophosphate (PRPP) to anthranilate to yield N-(5'-phosphoribosyl)-anthranilate (PRA). This chain is Anthranilate phosphoribosyltransferase, found in Prochlorococcus marinus (strain MIT 9215).